Here is a 341-residue protein sequence, read N- to C-terminus: N-acetyl-gamma-glutamyl-phosphate reductase (341 aa).

Cys147 is an active-site residue.

This sequence belongs to the NAGSA dehydrogenase family. Type 1 subfamily.

The protein localises to the cytoplasm. The enzyme catalyses N-acetyl-L-glutamate 5-semialdehyde + phosphate + NADP(+) = N-acetyl-L-glutamyl 5-phosphate + NADPH + H(+). It participates in amino-acid biosynthesis; L-arginine biosynthesis; N(2)-acetyl-L-ornithine from L-glutamate: step 3/4. Catalyzes the NADPH-dependent reduction of N-acetyl-5-glutamyl phosphate to yield N-acetyl-L-glutamate 5-semialdehyde. This is N-acetyl-gamma-glutamyl-phosphate reductase from Dehalococcoides mccartyi (strain ATCC BAA-2266 / KCTC 15142 / 195) (Dehalococcoides ethenogenes (strain 195)).